An 821-amino-acid chain; its full sequence is Pentatricopeptide repeat-containing protein At4g04790, mitochondrial (821 aa).

The N-terminal 74 residues, 1-74, are a transit peptide targeting the mitochondrion; it reads MVVSKVNKSL…KLLHVTTSDK (74 aa). PPR repeat units lie at residues 372 to 406, 407 to 441, 442 to 476, 477 to 511, 512 to 542, 544 to 574, and 578 to 612; these read SSTS…GLMI, SADI…SVKP, NTEN…NLEP, NSSM…GVKP, DSIT…AGVQ, TKRI…PDVP, and QNEL…ECHV. Residues 801-821 form a disordered region; it reads AFSQAPNKKKPKKKMIVLSTK.

Belongs to the PPR family. P subfamily.

It localises to the mitochondrion. This chain is Pentatricopeptide repeat-containing protein At4g04790, mitochondrial, found in Arabidopsis thaliana (Mouse-ear cress).